The following is a 352-amino-acid chain: Cyclin-O (352 aa).

The tract at residues 1–40 (MVTPCPASPGSPAAGAGRRDSHQNLRAPVKKSRRPCLRRK) is disordered. Basic residues predominate over residues 28–40 (PVKKSRRPCLRRK). Ser83 carries the post-translational modification Phosphoserine.

This sequence belongs to the cyclin family. Present in respiratory cells (at protein level). Expressed in multiciliated tissue in brain and fallopian tube (at protein level). Highly expressed in oocytes.

It is found in the cytoplasm. It localises to the nucleus. The protein localises to the nucleolus. In terms of biological role, specifically required for generation of multiciliated cells, possibly by promoting a cell cycle state compatible with centriole amplification and maturation. Acts downstream of MCIDAS to promote mother centriole amplification and maturation in preparation for apical docking. May be involved in apoptosis in lymphoid cells; however, this result requires additional evidences in vivo. May be involved in oocyte meiotic resumption in oocytes. This chain is Cyclin-O, found in Mus musculus (Mouse).